The primary structure comprises 801 residues: U-box domain-containing protein 34 (801 aa).

A disordered region spans residues 205–309 (RSPTLPDPRQ…PETSRKSKKV (105 aa)). Over residues 236-254 (LTCNKPKTPQSSKASSATT) the composition is skewed to polar residues. Residues 289–309 (VSEHRDSDRSPPETSRKSKKV) show a composition bias toward basic and acidic residues. The stretch at 301–395 (ETSRKSKKVE…ETAKALLARE (95 aa)) forms a coiled coil. The region spanning 442 to 705 (FSPEKVIGEG…DLKSEVIPVL (264 aa)) is the Protein kinase domain. ATP is bound by residues 448-456 (IGEGGYGKV) and K469. D564 serves as the catalytic Proton acceptor. Residues 724 to 797 (RAPSHYFCPI…RDWKSRVRFS (74 aa)) form the U-box domain.

The protein belongs to the protein kinase superfamily. Ser/Thr protein kinase family.

It carries out the reaction L-seryl-[protein] + ATP = O-phospho-L-seryl-[protein] + ADP + H(+). The enzyme catalyses L-threonyl-[protein] + ATP = O-phospho-L-threonyl-[protein] + ADP + H(+). It catalyses the reaction S-ubiquitinyl-[E2 ubiquitin-conjugating enzyme]-L-cysteine + [acceptor protein]-L-lysine = [E2 ubiquitin-conjugating enzyme]-L-cysteine + N(6)-ubiquitinyl-[acceptor protein]-L-lysine.. The protein operates within protein modification; protein ubiquitination. Functionally, functions as an E3 ubiquitin ligase. This Arabidopsis thaliana (Mouse-ear cress) protein is U-box domain-containing protein 34 (PUB34).